The primary structure comprises 477 residues: ATP synthase subunit beta (477 aa).

163–170 (GGAGVGKT) lines the ATP pocket.

Belongs to the ATPase alpha/beta chains family. F-type ATPases have 2 components, CF(1) - the catalytic core - and CF(0) - the membrane proton channel. CF(1) has five subunits: alpha(3), beta(3), gamma(1), delta(1), epsilon(1). CF(0) has four main subunits: a(1), b(1), b'(1) and c(9-12).

It is found in the cellular thylakoid membrane. The catalysed reaction is ATP + H2O + 4 H(+)(in) = ADP + phosphate + 5 H(+)(out). Functionally, produces ATP from ADP in the presence of a proton gradient across the membrane. The catalytic sites are hosted primarily by the beta subunits. The sequence is that of ATP synthase subunit beta from Synechococcus sp. (strain JA-2-3B'a(2-13)) (Cyanobacteria bacterium Yellowstone B-Prime).